The following is a 317-amino-acid chain: Adenine deaminase (317 aa).

The Zn(2+) site is built by histidine 14, histidine 16, and histidine 194. Glutamate 197 serves as the catalytic Proton donor. Zn(2+) is bound at residue aspartate 275. Aspartate 276 serves as a coordination point for substrate.

It belongs to the metallo-dependent hydrolases superfamily. Adenosine and AMP deaminases family. Adenine deaminase type 2 subfamily. Zn(2+) serves as cofactor.

The catalysed reaction is adenine + H2O + H(+) = hypoxanthine + NH4(+). In terms of biological role, catalyzes the hydrolytic deamination of adenine to hypoxanthine. Plays an important role in the purine salvage pathway and in nitrogen catabolism. In Bordetella bronchiseptica (strain ATCC BAA-588 / NCTC 13252 / RB50) (Alcaligenes bronchisepticus), this protein is Adenine deaminase.